The chain runs to 237 residues: Large ribosomal subunit protein uL3 (237 aa).

Disordered regions lie at residues 133–155 (ASHG…DPGK) and 213–237 (PENA…EGAE). Over residues 135–150 (HGNSITHRSHGSTGQR) the composition is skewed to polar residues. Q151 carries the N5-methylglutamine modification. Over residues 220 to 237 (AGLRAGAKAEAAATEGAE) the composition is skewed to low complexity.

This sequence belongs to the universal ribosomal protein uL3 family. In terms of assembly, part of the 50S ribosomal subunit. Forms a cluster with proteins L14 and L19. Post-translationally, methylated by PrmB.

In terms of biological role, one of the primary rRNA binding proteins, it binds directly near the 3'-end of the 23S rRNA, where it nucleates assembly of the 50S subunit. This is Large ribosomal subunit protein uL3 from Brucella canis (strain ATCC 23365 / NCTC 10854 / RM-666).